The following is a 194-amino-acid chain: Peptidyl-tRNA hydrolase (194 aa).

Tyr-17 contacts tRNA. His-22 (proton acceptor) is an active-site residue. Residues Phe-68, Asn-70, and Asn-116 each coordinate tRNA.

The protein belongs to the PTH family. Monomer.

The protein localises to the cytoplasm. It catalyses the reaction an N-acyl-L-alpha-aminoacyl-tRNA + H2O = an N-acyl-L-amino acid + a tRNA + H(+). Its function is as follows. Hydrolyzes ribosome-free peptidyl-tRNAs (with 1 or more amino acids incorporated), which drop off the ribosome during protein synthesis, or as a result of ribosome stalling. Catalyzes the release of premature peptidyl moieties from peptidyl-tRNA molecules trapped in stalled 50S ribosomal subunits, and thus maintains levels of free tRNAs and 50S ribosomes. The chain is Peptidyl-tRNA hydrolase from Pasteurella multocida (strain Pm70).